Consider the following 395-residue polypeptide: Phosphopentomutase (395 aa).

Mn(2+)-binding residues include D13, D288, H293, D329, H330, and H341.

It belongs to the phosphopentomutase family. It depends on Mn(2+) as a cofactor.

The protein resides in the cytoplasm. The catalysed reaction is 2-deoxy-alpha-D-ribose 1-phosphate = 2-deoxy-D-ribose 5-phosphate. It carries out the reaction alpha-D-ribose 1-phosphate = D-ribose 5-phosphate. Its pathway is carbohydrate degradation; 2-deoxy-D-ribose 1-phosphate degradation; D-glyceraldehyde 3-phosphate and acetaldehyde from 2-deoxy-alpha-D-ribose 1-phosphate: step 1/2. Its function is as follows. Isomerase that catalyzes the conversion of deoxy-ribose 1-phosphate (dRib-1-P) and ribose 1-phosphate (Rib-1-P) to deoxy-ribose 5-phosphate (dRib-5-P) and ribose 5-phosphate (Rib-5-P), respectively. The polypeptide is Phosphopentomutase (Agathobacter rectalis (strain ATCC 33656 / DSM 3377 / JCM 17463 / KCTC 5835 / VPI 0990) (Eubacterium rectale)).